Here is a 208-residue protein sequence, read N- to C-terminus: Cytochrome c oxidase assembly protein CtaG (208 aa).

Over 1–19 the chain is Cytoplasmic; the sequence is MSPPLPQAPQQPAPRRGLG. The helical; Signal-anchor for type II membrane protein transmembrane segment at 20-42 threads the bilayer; it reads HDTAVAAVCGLVVALMVGASFAA. The Periplasmic segment spans residues 43 to 208; it reads VPFYNWFCRT…SEPAPRKGNL (166 aa).

The protein belongs to the COX11/CtaG family.

Its subcellular location is the cell inner membrane. Exerts its effect at some terminal stage of cytochrome c oxidase synthesis, probably by being involved in the insertion of the copper B into subunit I. This Rhodopseudomonas palustris (strain TIE-1) protein is Cytochrome c oxidase assembly protein CtaG.